The sequence spans 273 residues: 2,3,4,5-tetrahydropyridine-2,6-dicarboxylate N-succinyltransferase (273 aa).

Substrate-binding residues include R104 and D141.

The protein belongs to the transferase hexapeptide repeat family. In terms of assembly, homotrimer.

It is found in the cytoplasm. The enzyme catalyses (S)-2,3,4,5-tetrahydrodipicolinate + succinyl-CoA + H2O = (S)-2-succinylamino-6-oxoheptanedioate + CoA. The protein operates within amino-acid biosynthesis; L-lysine biosynthesis via DAP pathway; LL-2,6-diaminopimelate from (S)-tetrahydrodipicolinate (succinylase route): step 1/3. The protein is 2,3,4,5-tetrahydropyridine-2,6-dicarboxylate N-succinyltransferase of Neisseria meningitidis serogroup A / serotype 4A (strain DSM 15465 / Z2491).